We begin with the raw amino-acid sequence, 477 residues long: Methionine aminopeptidase 2 (477 aa).

Residues 1-121 are disordered; sequence MAGVEEAASC…TDPPSVPICD (121 aa). N-acetylalanine is present on Ala-2. Basic residues predominate over residues 36–46; sequence KKKKRKKKKSK. Ser-45 bears the Phosphoserine mark. The segment covering 54-78 has biased composition (basic and acidic residues); that stretch reads EPDKEAGASVDEVTRQLERQALEEK. Ser-62 is modified (phosphoserine; alternate). O-linked (GlcNAc) serine; alternate glycosylation occurs at Ser-62. Positions 79–91 are enriched in acidic residues; the sequence is EKDDDDEDGDGDG. A compositionally biased stretch (basic residues) spans 96–108; sequence GKKKKKKKKKRGP. His-230 contacts substrate. Positions 250, 261, and 330 each coordinate a divalent metal cation. Residue His-338 coordinates substrate. A divalent metal cation contacts are provided by Glu-363 and Glu-458.

It belongs to the peptidase M24A family. Methionine aminopeptidase eukaryotic type 2 subfamily. As to quaternary structure, binds EIF2S1 at low magnesium concentrations. Interacts strongly with the eIF-2 gamma-subunit EIF2S3. Requires Co(2+) as cofactor. It depends on Zn(2+) as a cofactor. The cofactor is Mn(2+). Fe(2+) serves as cofactor. Contains approximately 12 O-linked N-acetylglucosamine (GlcNAc) residues. O-glycosylation is required for EIF2S1 binding.

Its subcellular location is the cytoplasm. The catalysed reaction is Release of N-terminal amino acids, preferentially methionine, from peptides and arylamides.. Cotranslationally removes the N-terminal methionine from nascent proteins. The N-terminal methionine is often cleaved when the second residue in the primary sequence is small and uncharged (Met-Ala-, Cys, Gly, Pro, Ser, Thr, or Val). Its function is as follows. Protects eukaryotic initiation factor EIF2S1 from translation-inhibiting phosphorylation by inhibitory kinases such as EIF2AK2/PKR and EIF2AK1/HCR. Plays a critical role in the regulation of protein synthesis. This is Methionine aminopeptidase 2 from Bos taurus (Bovine).